A 222-amino-acid polypeptide reads, in one-letter code: Ribonuclease HII (222 aa).

In terms of domain architecture, RNase H type-2 spans 17–206; the sequence is DLVAGVDEVG…VRAAHEARAS (190 aa). D23, E24, and D115 together coordinate a divalent metal cation.

Belongs to the RNase HII family. Requires Mn(2+) as cofactor. The cofactor is Mg(2+).

It localises to the cytoplasm. It catalyses the reaction Endonucleolytic cleavage to 5'-phosphomonoester.. Its function is as follows. Endonuclease that specifically degrades the RNA of RNA-DNA hybrids. In Pseudomonas savastanoi pv. phaseolicola (strain 1448A / Race 6) (Pseudomonas syringae pv. phaseolicola (strain 1448A / Race 6)), this protein is Ribonuclease HII.